Reading from the N-terminus, the 204-residue chain is NAD(P)H dehydrogenase (quinone) (204 aa).

The region spanning 4–195 (IQIVFYSMYG…AIARFQGAHV (192 aa)) is the Flavodoxin-like domain. FMN is bound by residues 10–15 (SMYGHI) and 83–85 (TRF). Tyr-12 is an NAD(+) binding site. A substrate-binding site is contributed by Trp-103. Residues 118-124 (STATQHG) and His-139 each bind FMN.

This sequence belongs to the WrbA family. FMN is required as a cofactor.

It carries out the reaction a quinone + NADH + H(+) = a quinol + NAD(+). The catalysed reaction is a quinone + NADPH + H(+) = a quinol + NADP(+). The chain is NAD(P)H dehydrogenase (quinone) from Trichlorobacter lovleyi (strain ATCC BAA-1151 / DSM 17278 / SZ) (Geobacter lovleyi).